Reading from the N-terminus, the 343-residue chain is Holliday junction branch migration complex subunit RuvB (343 aa).

The segment at 4–193 is large ATPase domain (RuvB-L); it reads TDNLTAAQPQ…FGIVSRLEFY (190 aa). ATP contacts are provided by residues Leu-32, Arg-33, Gly-74, Lys-77, Thr-78, Thr-79, 140 to 142, Arg-183, Tyr-193, and Arg-230; that span reads EDY. Thr-78 provides a ligand contact to Mg(2+). Residues 194–264 form a small ATPAse domain (RuvB-S) region; the sequence is ENRDLTTIVS…IADAALSMLD (71 aa). The tract at residues 267–343 is head domain (RuvB-H); the sequence is AQGLDVMDRK…YLHFGLPVEK (77 aa). 2 residues coordinate DNA: Arg-322 and Arg-327.

It belongs to the RuvB family. As to quaternary structure, homohexamer. Forms an RuvA(8)-RuvB(12)-Holliday junction (HJ) complex. HJ DNA is sandwiched between 2 RuvA tetramers; dsDNA enters through RuvA and exits via RuvB. An RuvB hexamer assembles on each DNA strand where it exits the tetramer. Each RuvB hexamer is contacted by two RuvA subunits (via domain III) on 2 adjacent RuvB subunits; this complex drives branch migration. In the full resolvosome a probable DNA-RuvA(4)-RuvB(12)-RuvC(2) complex forms which resolves the HJ.

The protein localises to the cytoplasm. The enzyme catalyses ATP + H2O = ADP + phosphate + H(+). Its function is as follows. The RuvA-RuvB-RuvC complex processes Holliday junction (HJ) DNA during genetic recombination and DNA repair, while the RuvA-RuvB complex plays an important role in the rescue of blocked DNA replication forks via replication fork reversal (RFR). RuvA specifically binds to HJ cruciform DNA, conferring on it an open structure. The RuvB hexamer acts as an ATP-dependent pump, pulling dsDNA into and through the RuvAB complex. RuvB forms 2 homohexamers on either side of HJ DNA bound by 1 or 2 RuvA tetramers; 4 subunits per hexamer contact DNA at a time. Coordinated motions by a converter formed by DNA-disengaged RuvB subunits stimulates ATP hydrolysis and nucleotide exchange. Immobilization of the converter enables RuvB to convert the ATP-contained energy into a lever motion, pulling 2 nucleotides of DNA out of the RuvA tetramer per ATP hydrolyzed, thus driving DNA branch migration. The RuvB motors rotate together with the DNA substrate, which together with the progressing nucleotide cycle form the mechanistic basis for DNA recombination by continuous HJ branch migration. Branch migration allows RuvC to scan DNA until it finds its consensus sequence, where it cleaves and resolves cruciform DNA. The chain is Holliday junction branch migration complex subunit RuvB from Neisseria meningitidis serogroup C (strain 053442).